Consider the following 102-residue polypeptide: Integration host factor subunit alpha (102 aa).

This sequence belongs to the bacterial histone-like protein family. Heterodimer of an alpha and a beta chain.

Its function is as follows. This protein is one of the two subunits of integration host factor, a specific DNA-binding protein that functions in genetic recombination as well as in transcriptional and translational control. In Buchnera aphidicola subsp. Acyrthosiphon pisum (strain 5A), this protein is Integration host factor subunit alpha.